Here is a 450-residue protein sequence, read N- to C-terminus: L-lysine-epsilon aminotransferase (450 aa).

Positions 127 and 128 each coordinate pyridoxal 5'-phosphate. Positions 168 and 274 each coordinate 2-oxoglutarate. R168 is an L-lysine binding site. Q274 provides a ligand contact to pyridoxal 5'-phosphate. K300 is modified (N6-(pyridoxal phosphate)lysine). R423 contributes to the 2-oxoglutarate binding site.

This sequence belongs to the class-III pyridoxal-phosphate-dependent aminotransferase family. Requires pyridoxal 5'-phosphate as cofactor.

It catalyses the reaction L-lysine + 2-oxoglutarate = (S)-2-amino-6-oxohexanoate + L-glutamate. It functions in the pathway antibiotic biosynthesis; cephamycin C biosynthesis. Its function is as follows. Catalyzes the transfer of the terminal amino group of L-lysine to alpha-ketoglutarate to yield L-glutamate and 2-aminoadipate 6-semialdehyde ((S)-2-amino-6-oxohexanoate), which is spontaneously converted to the dehydrated form 1-piperideine 6-carboxylate. The sequence is that of L-lysine-epsilon aminotransferase from Amycolatopsis lactamdurans (Nocardia lactamdurans).